Here is a 78-residue protein sequence, read N- to C-terminus: DNA gyrase inhibitor YacG (78 aa).

Residues Cys-7, Cys-10, Cys-26, and Cys-30 each coordinate Zn(2+).

The protein belongs to the DNA gyrase inhibitor YacG family. In terms of assembly, interacts with GyrB. The cofactor is Zn(2+).

In terms of biological role, inhibits all the catalytic activities of DNA gyrase by preventing its interaction with DNA. Acts by binding directly to the C-terminal domain of GyrB, which probably disrupts DNA binding by the gyrase. The chain is DNA gyrase inhibitor YacG from Shewanella piezotolerans (strain WP3 / JCM 13877).